The following is a 430-amino-acid chain: Adenylosuccinate synthetase (430 aa).

GTP-binding positions include 13-19 (GDEGKGK) and 41-43 (GHT). D14 serves as the catalytic Proton acceptor. Mg(2+) contacts are provided by D14 and G41. Residues 14–17 (DEGK), 39–42 (NAGH), T130, R144, Q225, T240, and R304 each bind IMP. The active-site Proton donor is the H42. Residue 300 to 306 (STTGRAR) participates in substrate binding. GTP is bound by residues R306, 332-334 (KLD), and 414-416 (STG).

It belongs to the adenylosuccinate synthetase family. Homodimer. Mg(2+) is required as a cofactor.

It localises to the cytoplasm. It carries out the reaction IMP + L-aspartate + GTP = N(6)-(1,2-dicarboxyethyl)-AMP + GDP + phosphate + 2 H(+). It functions in the pathway purine metabolism; AMP biosynthesis via de novo pathway; AMP from IMP: step 1/2. In terms of biological role, plays an important role in the de novo pathway of purine nucleotide biosynthesis. Catalyzes the first committed step in the biosynthesis of AMP from IMP. This chain is Adenylosuccinate synthetase, found in Alcanivorax borkumensis (strain ATCC 700651 / DSM 11573 / NCIMB 13689 / SK2).